A 356-amino-acid chain; its full sequence is Protein RecA (356 aa).

79-86 is an ATP binding site; that stretch reads GPESSGKT.

It belongs to the RecA family.

The protein resides in the cytoplasm. Functionally, can catalyze the hydrolysis of ATP in the presence of single-stranded DNA, the ATP-dependent uptake of single-stranded DNA by duplex DNA, and the ATP-dependent hybridization of homologous single-stranded DNAs. It interacts with LexA causing its activation and leading to its autocatalytic cleavage. This Borrelia hermsii (strain HS1 / DAH) protein is Protein RecA.